The chain runs to 251 residues: MHILLSNDDGYAAPGLRALAAALSPLAKITVVAPERNRSGASNSLTLERPLRATRAENGFIRVDGTPTDCVHLAITGLLDSEPDMVFAGINHGANLGDDVIYSGTVAAATEGRFLGLPAVAISLAAHNPEHFETAAQVAIELLERIRENPLPADTILNVNVPDIPPDELRGYRATRLGARHKAEAVVRTRDPRGREIFWVGCAGPEADAGPGTDFHAIRQNCVSVTPLQIDLTRYERLDQLGAWLPGRVTA.

4 residues coordinate a divalent metal cation: Asp-8, Asp-9, Ser-39, and Asn-91.

Belongs to the SurE nucleotidase family. The cofactor is a divalent metal cation.

It localises to the cytoplasm. The enzyme catalyses a ribonucleoside 5'-phosphate + H2O = a ribonucleoside + phosphate. Its function is as follows. Nucleotidase that shows phosphatase activity on nucleoside 5'-monophosphates. This Methylococcus capsulatus (strain ATCC 33009 / NCIMB 11132 / Bath) protein is 5'-nucleotidase SurE.